A 399-amino-acid chain; its full sequence is Imidazolonepropionase (399 aa).

Residues His74 and His76 each contribute to the Fe(3+) site. Positions 74 and 76 each coordinate Zn(2+). Positions 83, 146, and 176 each coordinate 4-imidazolone-5-propanoate. An N-formimidoyl-L-glutamate-binding site is contributed by Tyr146. His238 provides a ligand contact to Fe(3+). His238 contacts Zn(2+). Gln241 serves as a coordination point for 4-imidazolone-5-propanoate. Asp312 contributes to the Fe(3+) binding site. Asp312 is a binding site for Zn(2+). Residues Asn314 and Gly316 each coordinate N-formimidoyl-L-glutamate. Ser317 serves as a coordination point for 4-imidazolone-5-propanoate.

It belongs to the metallo-dependent hydrolases superfamily. HutI family. It depends on Zn(2+) as a cofactor. Fe(3+) serves as cofactor.

It is found in the cytoplasm. It carries out the reaction 4-imidazolone-5-propanoate + H2O = N-formimidoyl-L-glutamate. It participates in amino-acid degradation; L-histidine degradation into L-glutamate; N-formimidoyl-L-glutamate from L-histidine: step 3/3. Catalyzes the hydrolytic cleavage of the carbon-nitrogen bond in imidazolone-5-propanoate to yield N-formimidoyl-L-glutamate. It is the third step in the universal histidine degradation pathway. This Deinococcus deserti (strain DSM 17065 / CIP 109153 / LMG 22923 / VCD115) protein is Imidazolonepropionase.